Consider the following 476-residue polypeptide: Glycogen synthase (476 aa).

Lys-15 serves as a coordination point for ADP-alpha-D-glucose.

The protein belongs to the glycosyltransferase 1 family. Bacterial/plant glycogen synthase subfamily.

The catalysed reaction is [(1-&gt;4)-alpha-D-glucosyl](n) + ADP-alpha-D-glucose = [(1-&gt;4)-alpha-D-glucosyl](n+1) + ADP + H(+). Its pathway is glycan biosynthesis; glycogen biosynthesis. Functionally, synthesizes alpha-1,4-glucan chains using ADP-glucose. The protein is Glycogen synthase of Streptococcus mutans serotype c (strain ATCC 700610 / UA159).